The primary structure comprises 568 residues: MTALNSYAFAMSEYAEGDSSLLQLQEVDSSRMGGHVLSPTFNSSSPSLPVESHPICIPSPYTDLGHDFTTLPFYSPSLLGYGTSPLSDCPSVRQSLSPTLFWPPHSHVSSLALHQQQTRLQPNHPTGGTWAELTPHDHGEEENCKPLSKRVAVAEETSTSLRGKADMHYCAVCSDYASGYHYGVWSCEGCKAFFKRSIQGHNDYICPATNQCTIDKNRRKSCQACRLRKCYEVGMMKCGLRRDRSSYQQRGAQQNRLTRFSGRMRTSGPRSQEIKTVQRPLSGNKVVTMALSPEELIARIMDAEPPEIYLMKDVKKPFTEANVMMSLTNLADKELVHMISWAKKIPGFVEIGLFDQVHLLECCWLEVLMLGLMWRSVNHPGKLVFSPDLSLSRDEGSCVQGFAEIFDMLLAATSRFRELKLQREEYACLKAMILLNSNMCLSSAEGGEELQSRSKLLCLLDSVTDALVWAISKTGLSFQQRSTRLAHLLMLLSHIRHVSNKGMDHLHSMKMKKMVPLYDLLLEMLDAHIMHGSRLSHSGPQADPVPKESNCVQETFTCTSQHGGTLRP.

Positions 12-169 (SEYAEGDSSL…SLRGKADMHY (158 aa)) are modulating. NR C4-type zinc fingers lie at residues 170-190 (CAVC…CEGC) and 206-230 (CPAT…LRKC). The segment at residues 170–235 (CAVCSDYASG…RLRKCYEVGM (66 aa)) is a DNA-binding region (nuclear receptor). The 237-residue stretch at 292 to 528 (SPEELIARIM…DLLLEMLDAH (237 aa)) folds into the NR LBD domain.

Belongs to the nuclear hormone receptor family. NR3 subfamily. In terms of assembly, binds DNA as a homodimer. Can form a heterodimer with ER-alpha.

It localises to the nucleus. In terms of biological role, binds estrogens with an affinity similar to that of ER-alpha, and activates expression of reporter genes containing estrogen response elements (ERE) in an estrogen-dependent manner. The protein is Estrogen receptor beta-1 (esr2a) of Carassius auratus (Goldfish).